The chain runs to 1265 residues: DNA-directed RNA polymerase subunit beta'' (1265 aa).

Zn(2+) is bound by residues Cys-223, Cys-297, Cys-304, and Cys-307.

This sequence belongs to the RNA polymerase beta' chain family. RpoC2 subfamily. In plastids the minimal PEP RNA polymerase catalytic core is composed of four subunits: alpha, beta, beta', and beta''. When a (nuclear-encoded) sigma factor is associated with the core the holoenzyme is formed, which can initiate transcription. Requires Zn(2+) as cofactor.

The protein localises to the plastid. The protein resides in the cyanelle. It catalyses the reaction RNA(n) + a ribonucleoside 5'-triphosphate = RNA(n+1) + diphosphate. DNA-dependent RNA polymerase catalyzes the transcription of DNA into RNA using the four ribonucleoside triphosphates as substrates. The chain is DNA-directed RNA polymerase subunit beta'' from Cyanophora paradoxa.